Here is a 425-residue protein sequence, read N- to C-terminus: Dihydroorotase (425 aa).

The Zn(2+) site is built by histidine 59 and histidine 61. Substrate-binding positions include 61 to 63 (HLR) and asparagine 93. Zn(2+)-binding residues include aspartate 151, histidine 178, and histidine 231. Asparagine 277 contributes to the substrate binding site. Aspartate 304 lines the Zn(2+) pocket. Aspartate 304 is a catalytic residue. Substrate-binding positions include histidine 308 and 322 to 323 (FG).

It belongs to the metallo-dependent hydrolases superfamily. DHOase family. Class I DHOase subfamily. Zn(2+) serves as cofactor.

It carries out the reaction (S)-dihydroorotate + H2O = N-carbamoyl-L-aspartate + H(+). Its pathway is pyrimidine metabolism; UMP biosynthesis via de novo pathway; (S)-dihydroorotate from bicarbonate: step 3/3. In terms of biological role, catalyzes the reversible cyclization of carbamoyl aspartate to dihydroorotate. This Staphylococcus epidermidis (strain ATCC 12228 / FDA PCI 1200) protein is Dihydroorotase.